Here is an 88-residue protein sequence, read N- to C-terminus: Large ribosomal subunit protein bL27 (88 aa).

Residues 1–25 are disordered; the sequence is MAHKKGASSSSNGRDSEAKRLGVKR.

It belongs to the bacterial ribosomal protein bL27 family.

The polypeptide is Large ribosomal subunit protein bL27 (Corynebacterium diphtheriae (strain ATCC 700971 / NCTC 13129 / Biotype gravis)).